Consider the following 343-residue polypeptide: MAASEAPPFWWEKPDWRAWALWPLSSAYGFAASARLRAAKREKIPAAVLCIGNLTVGGEGKTPIAIALARHAMRKGLTVGFLSRGYGGSHFKPHIVSPEDDSARAVGDEPLLLARQALTVISRDRAAGARRLVQAGCNLIIMDDGFQSARLHMDYALIVVDAMRGLGNGHVFPAGPMRAPLTEQMRFADGVVTMGEGDAADIVVRSASRAGRPVYSARIRPRSRNGLKGKRVLAFAGIGNPRKFYATLKACGADIVLERSFPDHHLFTEEDVSELSREAAKESLLLVTTEKDFVRLQNSMQPMRDFAASVQALKVEAVFDEPGAPDAIINAAQQAWRERMLKR.

Position 55 to 62 (55 to 62 (TVGGEGKT)) interacts with ATP.

It belongs to the LpxK family.

The catalysed reaction is a lipid A disaccharide + ATP = a lipid IVA + ADP + H(+). It functions in the pathway glycolipid biosynthesis; lipid IV(A) biosynthesis; lipid IV(A) from (3R)-3-hydroxytetradecanoyl-[acyl-carrier-protein] and UDP-N-acetyl-alpha-D-glucosamine: step 6/6. Its function is as follows. Transfers the gamma-phosphate of ATP to the 4'-position of a tetraacyldisaccharide 1-phosphate intermediate (termed DS-1-P) to form tetraacyldisaccharide 1,4'-bis-phosphate (lipid IVA). The sequence is that of Tetraacyldisaccharide 4'-kinase from Chelativorans sp. (strain BNC1).